Here is a 307-residue protein sequence, read N- to C-terminus: Protein phosphatase EYA (307 aa).

The interval 1-15 is necessary for optimum phosphatase activity; the sequence is MNNDTSKKLGTLVSD. Asp25 acts as the Nucleophile in catalysis. Mg(2+) is bound by residues Asp25, Asp27, and Asp253. The active-site Proton donor is Asp27.

The protein belongs to the HAD-like hydrolase superfamily. EYA family. The cofactor is Mg(2+).

The enzyme catalyses O-phospho-L-tyrosyl-[protein] + H2O = L-tyrosyl-[protein] + phosphate. With respect to regulation, inhibited by EDTA. In terms of biological role, possesses phosphatase activity toward para-nitrophenyl phosphate (pNPP) in vitro. Possesses phosphatase activity toward several phosphotyrosine-containing peptides in vitro, with low peptide substrate specificity. The protein is Protein phosphatase EYA of Arabidopsis thaliana (Mouse-ear cress).